Here is a 398-residue protein sequence, read N- to C-terminus: Acetate kinase (398 aa).

Residue Asn-9 participates in Mg(2+) binding. Lys-16 provides a ligand contact to ATP. A substrate-binding site is contributed by Arg-89. Residue Asp-146 is the Proton donor/acceptor of the active site. ATP is bound by residues 206–210, 281–283, and 329–333; these read HLGNG, DCR, and GIGEN. Mg(2+) is bound at residue Glu-384.

The protein belongs to the acetokinase family. Homodimer. Mg(2+) serves as cofactor. It depends on Mn(2+) as a cofactor.

It is found in the cytoplasm. It catalyses the reaction acetate + ATP = acetyl phosphate + ADP. Its pathway is metabolic intermediate biosynthesis; acetyl-CoA biosynthesis; acetyl-CoA from acetate: step 1/2. Functionally, catalyzes the formation of acetyl phosphate from acetate and ATP. Can also catalyze the reverse reaction. The sequence is that of Acetate kinase from Vibrio campbellii (strain ATCC BAA-1116).